The following is a 441-amino-acid chain: FBD-associated F-box protein At5g18780 (441 aa).

An F-box domain is found at 10 to 56; sequence EDRISILPEPLLCHILSFLRTKDSVRTSVLSSRWRDLWLWVPRLDLD. An FBD domain is found at 366-410; it reads LPRCLISSLASVDIESPITDKATELKLVSYLLENSTTLKKLVLRL.

In Arabidopsis thaliana (Mouse-ear cress), this protein is FBD-associated F-box protein At5g18780.